The sequence spans 637 residues: Phosphomethylpyrimidine synthase (637 aa).

Substrate contacts are provided by residues Asn242, Met271, Tyr300, His336, 356-358, 397-400, and Glu436; these read SRG and DGLR. His440 provides a ligand contact to Zn(2+). Position 463 (Tyr463) interacts with substrate. His504 is a Zn(2+) binding site. [4Fe-4S] cluster-binding residues include Cys584, Cys587, and Cys592.

The protein belongs to the ThiC family. Homodimer. The cofactor is [4Fe-4S] cluster.

It carries out the reaction 5-amino-1-(5-phospho-beta-D-ribosyl)imidazole + S-adenosyl-L-methionine = 4-amino-2-methyl-5-(phosphooxymethyl)pyrimidine + CO + 5'-deoxyadenosine + formate + L-methionine + 3 H(+). Its pathway is cofactor biosynthesis; thiamine diphosphate biosynthesis. Catalyzes the synthesis of the hydroxymethylpyrimidine phosphate (HMP-P) moiety of thiamine from aminoimidazole ribotide (AIR) in a radical S-adenosyl-L-methionine (SAM)-dependent reaction. The polypeptide is Phosphomethylpyrimidine synthase (Bordetella bronchiseptica (strain ATCC BAA-588 / NCTC 13252 / RB50) (Alcaligenes bronchisepticus)).